A 197-amino-acid chain; its full sequence is Double homeobox protein 5 (197 aa).

2 consecutive DNA-binding regions (homeobox) follow at residues 46-105 and 121-180; these read GRRM…LRQH and GRRK…RGQS. The tract at residues 101–127 is disordered; that stretch reads QLRQHRRQSRPWPGRRDPQKGRRKRTA.

Belongs to the paired homeobox family. In terms of tissue distribution, expressed in hepatoma Hep3B cells.

Its subcellular location is the nucleus. The sequence is that of Double homeobox protein 5 (DUX5) from Homo sapiens (Human).